Consider the following 519-residue polypeptide: Baeyer-Villiger monooxygenase (519 aa).

Residues Glu-41, 49–52, Asp-61, Tyr-67, and Val-110 contribute to the FAD site; that span reads TWRD. 59 to 61 lines the NADP(+) pocket; sequence ACD. NADP(+) is bound by residues 183-189, 206-207, and 292-293; these read TGASAIQ, RT, and KR. Residue Met-399 participates in FAD binding. The tract at residues 499 to 519 is disordered; sequence GAKAAEADTGADTGADAEVSA.

This sequence belongs to the FAD-binding monooxygenase family. FAD is required as a cofactor.

Catalyzes a Baeyer-Villiger oxidation reaction, i.e. the insertion of an oxygen atom into a carbon-carbon bond adjacent to a carbonyl, which converts ketones to esters or lactones using NADPH and/or NADH as an electron donor. Thus, can convert bicyclo[3.2.0]hept-2-en-6-one into the oxidative lactone products 2-oxabicyclo[3.3.0]oct-6-en-3-one and 3-oxabicyclo[3.3.0]oct-6-en-2-one. Is also able to catalyze the sulfoxidation of methyl phenyl sulfide (thioanisole). The protein is Baeyer-Villiger monooxygenase of Streptomyces coelicolor (strain ATCC BAA-471 / A3(2) / M145).